We begin with the raw amino-acid sequence, 142 residues long: uncharacterized protein (142 aa).

The Cytoplasmic portion of the chain corresponds to 1 to 9 (MDMVSPVLN). The chain crosses the membrane as a helical span at residues 10 to 30 (LQSSILGELVGIIGKVFFLLI). At 31–41 (EEIKYPIITPK) the chain is on the extracellular side. Residues 42–62 (IIVDAQISSWSLFFFASICNL) traverse the membrane as a helical segment. Residues 63-101 (SAKFREPIVTTSSIISLMESEKDLKNVNEYFQIMAKMLF) are Cytoplasmic-facing. Residues 102 to 122 (ILENKIVVSLFVVFNISVLII) traverse the membrane as a helical segment. Topologically, residues 123 to 142 (VKSEPYSYGKVLFKPSSSIF) are extracellular.

The protein resides in the membrane. This is an uncharacterized protein from Saccharomyces cerevisiae (strain ATCC 204508 / S288c) (Baker's yeast).